The sequence spans 481 residues: UDP-N-acetylmuramate--L-alanine ligase (481 aa).

122–128 provides a ligand contact to ATP; that stretch reads GVHGKTT.

This sequence belongs to the MurCDEF family.

It localises to the cytoplasm. The enzyme catalyses UDP-N-acetyl-alpha-D-muramate + L-alanine + ATP = UDP-N-acetyl-alpha-D-muramoyl-L-alanine + ADP + phosphate + H(+). The protein operates within cell wall biogenesis; peptidoglycan biosynthesis. Its function is as follows. Cell wall formation. In Treponema pallidum (strain Nichols), this protein is UDP-N-acetylmuramate--L-alanine ligase.